The following is a 221-amino-acid chain: Ribosomal RNA small subunit methyltransferase G (221 aa).

Residues G85, F90, 136 to 137 (AE), and R149 contribute to the S-adenosyl-L-methionine site.

The protein belongs to the methyltransferase superfamily. RNA methyltransferase RsmG family.

It is found in the cytoplasm. Specifically methylates the N7 position of a guanine in 16S rRNA. In Porphyromonas gingivalis (strain ATCC BAA-308 / W83), this protein is Ribosomal RNA small subunit methyltransferase G.